A 156-amino-acid polypeptide reads, in one-letter code: Cytochrome c-type biogenesis protein CcmE (156 aa).

Over M1–R16 the chain is Cytoplasmic. A helical; Signal-anchor for type II membrane protein transmembrane segment spans residues L17 to A37. Over L38–K156 the chain is Periplasmic. Heme is bound by residues H131 and Y135.

The protein belongs to the CcmE/CycJ family.

It localises to the cell inner membrane. In terms of biological role, heme chaperone required for the biogenesis of c-type cytochromes. Transiently binds heme delivered by CcmC and transfers the heme to apo-cytochromes in a process facilitated by CcmF and CcmH. This Novosphingobium aromaticivorans (strain ATCC 700278 / DSM 12444 / CCUG 56034 / CIP 105152 / NBRC 16084 / F199) protein is Cytochrome c-type biogenesis protein CcmE.